The primary structure comprises 60 residues: Large ribosomal subunit protein uL30 (60 aa).

This sequence belongs to the universal ribosomal protein uL30 family. As to quaternary structure, part of the 50S ribosomal subunit.

This chain is Large ribosomal subunit protein uL30, found in Shewanella loihica (strain ATCC BAA-1088 / PV-4).